The primary structure comprises 376 residues: Lipoyl synthase, mitochondrial (376 aa).

Residues Cys-103, Cys-108, Cys-114, Cys-134, Cys-138, Cys-141, and Ser-349 each contribute to the [4Fe-4S] cluster site. One can recognise a Radical SAM core domain in the interval 119–338; that stretch reads EHGTQTATIM…EDRGNQLGFL (220 aa).

It belongs to the radical SAM superfamily. Lipoyl synthase family. It depends on [4Fe-4S] cluster as a cofactor.

The protein resides in the mitochondrion. The enzyme catalyses [[Fe-S] cluster scaffold protein carrying a second [4Fe-4S](2+) cluster] + N(6)-octanoyl-L-lysyl-[protein] + 2 oxidized [2Fe-2S]-[ferredoxin] + 2 S-adenosyl-L-methionine + 4 H(+) = [[Fe-S] cluster scaffold protein] + N(6)-[(R)-dihydrolipoyl]-L-lysyl-[protein] + 4 Fe(3+) + 2 hydrogen sulfide + 2 5'-deoxyadenosine + 2 L-methionine + 2 reduced [2Fe-2S]-[ferredoxin]. It functions in the pathway protein modification; protein lipoylation via endogenous pathway; protein N(6)-(lipoyl)lysine from octanoyl-[acyl-carrier-protein]: step 2/2. Its function is as follows. Catalyzes the radical-mediated insertion of two sulfur atoms into the C-6 and C-8 positions of the octanoyl moiety bound to the lipoyl domains of lipoate-dependent enzymes, thereby converting the octanoylated domains into lipoylated derivatives. In Drosophila ananassae (Fruit fly), this protein is Lipoyl synthase, mitochondrial.